A 128-amino-acid chain; its full sequence is Small ribosomal subunit protein uS11 (128 aa).

The protein belongs to the universal ribosomal protein uS11 family. Part of the 30S ribosomal subunit. Interacts with proteins S7 and S18. Binds to IF-3.

Its function is as follows. Located on the platform of the 30S subunit, it bridges several disparate RNA helices of the 16S rRNA. Forms part of the Shine-Dalgarno cleft in the 70S ribosome. The polypeptide is Small ribosomal subunit protein uS11 (Chromohalobacter salexigens (strain ATCC BAA-138 / DSM 3043 / CIP 106854 / NCIMB 13768 / 1H11)).